Consider the following 323-residue polypeptide: Acetyl-coenzyme A carboxylase carboxyl transferase subunit alpha (323 aa).

The CoA carboxyltransferase C-terminal domain maps to 39–293 (RLAGKSQQLT…KRSLAESLRQ (255 aa)).

The protein belongs to the AccA family. As to quaternary structure, acetyl-CoA carboxylase is a heterohexamer composed of biotin carboxyl carrier protein (AccB), biotin carboxylase (AccC) and two subunits each of ACCase subunit alpha (AccA) and ACCase subunit beta (AccD).

Its subcellular location is the cytoplasm. The enzyme catalyses N(6)-carboxybiotinyl-L-lysyl-[protein] + acetyl-CoA = N(6)-biotinyl-L-lysyl-[protein] + malonyl-CoA. It functions in the pathway lipid metabolism; malonyl-CoA biosynthesis; malonyl-CoA from acetyl-CoA: step 1/1. Functionally, component of the acetyl coenzyme A carboxylase (ACC) complex. First, biotin carboxylase catalyzes the carboxylation of biotin on its carrier protein (BCCP) and then the CO(2) group is transferred by the carboxyltransferase to acetyl-CoA to form malonyl-CoA. This chain is Acetyl-coenzyme A carboxylase carboxyl transferase subunit alpha, found in Cupriavidus metallidurans (strain ATCC 43123 / DSM 2839 / NBRC 102507 / CH34) (Ralstonia metallidurans).